The primary structure comprises 278 residues: Elongation factor Ts (278 aa).

An involved in Mg(2+) ion dislocation from EF-Tu region spans residues T80–V83.

The protein belongs to the EF-Ts family.

It is found in the cytoplasm. In terms of biological role, associates with the EF-Tu.GDP complex and induces the exchange of GDP to GTP. It remains bound to the aminoacyl-tRNA.EF-Tu.GTP complex up to the GTP hydrolysis stage on the ribosome. This is Elongation factor Ts from Paenarthrobacter aurescens (strain TC1).